Reading from the N-terminus, the 320-residue chain is HPr kinase/phosphorylase (320 aa).

Catalysis depends on residues His-141 and Lys-162. Residue 156–163 (GHSGLGKS) participates in ATP binding. Ser-163 contributes to the Mg(2+) binding site. The active-site Proton acceptor; for phosphorylation activity. Proton donor; for dephosphorylation activity is the Asp-180. The tract at residues 204 to 213 (LEVRGLGILN) is important for the catalytic mechanism of both phosphorylation and dephosphorylation. Mg(2+) is bound at residue Glu-205. Arg-248 is a catalytic residue. Residues 269–274 (PVAVGR) form an important for the catalytic mechanism of dephosphorylation region.

Belongs to the HPrK/P family. As to quaternary structure, homohexamer. Mg(2+) serves as cofactor.

The catalysed reaction is [HPr protein]-L-serine + ATP = [HPr protein]-O-phospho-L-serine + ADP + H(+). The enzyme catalyses [HPr protein]-O-phospho-L-serine + phosphate + H(+) = [HPr protein]-L-serine + diphosphate. Catalyzes the ATP- as well as the pyrophosphate-dependent phosphorylation of a specific serine residue in HPr, a phosphocarrier protein of the phosphoenolpyruvate-dependent sugar phosphotransferase system (PTS). HprK/P also catalyzes the pyrophosphate-producing, inorganic phosphate-dependent dephosphorylation (phosphorolysis) of seryl-phosphorylated HPr (P-Ser-HPr). In Neisseria meningitidis serogroup B (strain ATCC BAA-335 / MC58), this protein is HPr kinase/phosphorylase.